The sequence spans 409 residues: Ingression protein 1 (409 aa).

Positions 1–114 (MSEEVWNGNQ…DPKEGYCTWY (114 aa)) constitute a C2 domain. Residues 300–409 (LSYDEDDDDD…TRKRPPPRLS (110 aa)) are disordered. Positions 302–313 (YDEDDDDDDEND) are enriched in acidic residues. Polar residues predominate over residues 315 to 328 (FYSSSHRVSHNYNQ). The span at 360 to 377 (LDSSSPNSHPHPSGLNSP) shows a compositional bias: low complexity. Polar residues predominate over residues 384 to 399 (TTSNSNFNSRKNSMSP). The residue at position 392 (Ser-392) is a Phosphoserine. Basic residues predominate over residues 400–409 (TRKRPPPRLS).

The protein belongs to the INN1/fic1 family. As to quaternary structure, interacts with CYK2, CYK3 and IQG1.

It is found in the bud neck. Functionally, required for the ingression of the plasma membrane into the bud neck at the end of cytokinesis, leading to the separation of the mother and daughter cells. Stimulates the synthesis of the primary septum (PS) by CHS2. This is Ingression protein 1 (INN1) from Saccharomyces cerevisiae (strain ATCC 204508 / S288c) (Baker's yeast).